A 65-amino-acid polypeptide reads, in one-letter code: Large ribosomal subunit protein bL31 (65 aa).

The Zn(2+) site is built by Cys-16, Cys-18, Cys-36, and Cys-39.

Belongs to the bacterial ribosomal protein bL31 family. Type A subfamily. In terms of assembly, part of the 50S ribosomal subunit. Zn(2+) is required as a cofactor.

Functionally, binds the 23S rRNA. This is Large ribosomal subunit protein bL31 from Campylobacter jejuni subsp. doylei (strain ATCC BAA-1458 / RM4099 / 269.97).